Here is a 1310-residue protein sequence, read N- to C-terminus: PAN2-PAN3 deadenylation complex catalytic subunit pan2 (1310 aa).

WD repeat units lie at residues 22–61, 67–105, 106–144, and 145–184; these read YHAGPASTIAFDNQDELLWIGTQKGFAGSFIGRELKRFTA, ETDGPLRQFLFVDKGVIFLGSRSVYMAARSGVPIWSIRH, ESMQDLRAMSFTSKGTSEILVAGWQNKMLVIDVNKGEVV, and KELPTQDQYSFLKMSRYICAATNKGTVNILDPITFTIKKQ. The tract at residues 318–463 is linker; that stretch reads QFTEIGIPPR…NNDHWSLRPE (146 aa). One can recognise a USP domain in the interval 463 to 850; it reads EAPPEYRICE…MPVVVMFQVK (388 aa). Residues His-525, Cys-530, Cys-535, Cys-538, Cys-645, Cys-648, Cys-700, and Cys-703 each coordinate Zn(2+). An Exonuclease domain is found at 897-1070; the sequence is IAIDTEFIRL…EDAQTALKLY (174 aa). Asp-900, Glu-902, Asp-1009, and Asp-1062 together coordinate a divalent metal cation. Positions 1121 to 1169 are disordered; the sequence is TPPVPAPGTTEGSFEISNSSTATTGGSALSATGGMGSASASSSMPSTPV. The segment covering 1139 to 1168 has biased composition (low complexity); that stretch reads SSTATTGGSALSATGGMGSASASSSMPSTP.

This sequence belongs to the peptidase C19 family. PAN2 subfamily. In terms of assembly, forms a heterotrimer with an asymmetric homodimer of the regulatory subunit par-2/pan3 to form the poly(A)-nuclease (PAN) deadenylation complex. It depends on a divalent metal cation as a cofactor.

Its subcellular location is the cytoplasm. The enzyme catalyses Exonucleolytic cleavage of poly(A) to 5'-AMP.. Positively regulated by the regulatory subunit par-2/pan3. Catalytic subunit of the poly(A)-nuclease (PAN) deadenylation complex, one of two cytoplasmic mRNA deadenylases involved in mRNA turnover. PAN specifically shortens poly(A) tails of RNA and the activity is stimulated by poly(A)-binding protein pabp-1. PAN deadenylation is followed by rapid degradation of the shortened mRNA tails by the CCR4-NOT complex. Deadenylated mRNAs are then degraded by two alternative mechanisms, namely exosome-mediated 3'-5' exonucleolytic degradation, or deadenylation-dependent mRNA decaping and subsequent 5'-3' exonucleolytic degradation by rgb-30/xrn1. May also be involved in post-transcriptional maturation of mRNA poly(A) tails. This chain is PAN2-PAN3 deadenylation complex catalytic subunit pan2 (par-1), found in Neurospora crassa (strain ATCC 24698 / 74-OR23-1A / CBS 708.71 / DSM 1257 / FGSC 987).